We begin with the raw amino-acid sequence, 106 residues long: Ribosomal protein eL42-like (106 aa).

Residues 26–53 (YKKGKDSLYAQGRRRYDRKQSGYGGQTK) form a disordered region. N6-methyllysine is present on Lys53.

This sequence belongs to the eukaryotic ribosomal protein eL42 family. Ubiquitously expressed.

Its subcellular location is the cytoplasm. The chain is Ribosomal protein eL42-like (RPL36AL) from Homo sapiens (Human).